Consider the following 495-residue polypeptide: Cytochrome P450 monooxygenase 113 (495 aa).

The chain crosses the membrane as a helical span at residues 2-22 (FLQIAACFTVIGLLYGLVSNL). Residue C428 participates in heme binding.

Belongs to the cytochrome P450 family. Heme serves as cofactor.

It is found in the membrane. It participates in secondary metabolite biosynthesis. In terms of biological role, cytochrome P450 monooxygenase that is able to use 4-ethoxybenzoic acid as a substrate for oxidation. The sequence is that of Cytochrome P450 monooxygenase 113 from Postia placenta (strain ATCC 44394 / Madison 698-R) (Brown rot fungus).